A 375-amino-acid chain; its full sequence is Metal tolerance protein B (375 aa).

Topologically, residues 1–57 (MELEQICILKPDDEEEMESPSPSKTEENLGVVPLSCAFTRQEHCVSETKEREESTRR) are cytoplasmic. A helical membrane pass occupies residues 58–78 (LSSLIFLYLIVMSVQIVGGFK). Residues 79–84 (ANSLAV) are Vacuolar-facing. The chain crosses the membrane as a helical span at residues 85–105 (MTDAAHLLSDVAGLCVSLLAI). At 106-122 (KVSSWEANPRNSFGFKR) the chain is on the cytoplasmic side. A helical transmembrane segment spans residues 123–143 (LEVLAAFLSVQLIWLVSGVII). Over 144–160 (HEAIQRLLSRSREVNGE) the chain is Vacuolar. A helical transmembrane segment spans residues 161-181 (IMFGISAFGFFMNLVMVLWLG). Residues 182-206 (HNHSHHHHDHHHHHHNHKHQHQHHH) form a required for zinc-binding region. Residues 182–240 (HNHSHHHHDHHHHHHNHKHQHQHHHKEVVAEEEEEEMNPLKGEKSSSKEMNINIQGAYL) are Cytoplasmic-facing. The helical transmembrane segment at 241–261 (HAMADMIQSLGVMIGGGIIWV) threads the bilayer. Residues 262–264 (KPK) lie on the Vacuolar side of the membrane. Residues 265–285 (WVLVDLICTLVFSAFALAATL) form a helical membrane-spanning segment. Over 286-375 (PILKNIFGIL…YHATVQVESE (90 aa)) the chain is Cytoplasmic.

This sequence belongs to the cation diffusion facilitator (CDF) transporter (TC 2.A.4) family. SLC30A subfamily.

The protein resides in the vacuole membrane. Involved in sequestration of excess zinc in the cytoplasm into vacuoles to maintain zinc homeostasis. This is Metal tolerance protein B (MTPB) from Arabidopsis thaliana (Mouse-ear cress).